The sequence spans 133 residues: Transcription antitermination protein NusB (133 aa).

This sequence belongs to the NusB family.

Its function is as follows. Involved in transcription antitermination. Required for transcription of ribosomal RNA (rRNA) genes. Binds specifically to the boxA antiterminator sequence of the ribosomal RNA (rrn) operons. This Shouchella clausii (strain KSM-K16) (Alkalihalobacillus clausii) protein is Transcription antitermination protein NusB.